Reading from the N-terminus, the 60-residue chain is MSSGKKAVKVKTPAGKEAELVPEKVWALAPKGRKGVKIGLFKDPETGKYFRHKLPDDYPI.

Belongs to the Cren7 family. Monomer. In terms of processing, methylated at multiple sites, to varying extents.

The protein localises to the chromosome. It is found in the cytoplasm. A chromatin protein, binds double-stranded DNA without sequence specificity. Constrains negative DNA supercoils. The protein is Chromatin protein Cren7 of Saccharolobus islandicus (strain M.16.4 / Kamchatka #3) (Sulfolobus islandicus).